The following is an 852-amino-acid chain: Taste receptor type 1 member 3 (852 aa).

The N-terminal stretch at 1–20 (MLGPAVLGLSLWALLHPGTG) is a signal peptide. Over 21 to 570 (APLCLSQQLR…FLAWGEPAVL (550 aa)) the chain is Extracellular. 8 N-linked (GlcNAc...) asparagine glycosylation sites follow: Asn-85, Asn-130, Asn-264, Asn-285, Asn-380, Asn-411, Asn-432, and Asn-475. Positions 536 to 545 (IACTFCGQDE) are required for brazzein responsiveness. A helical transmembrane segment spans residues 571–591 (LLLLLLSLALGLVLAALGLFV). Residues 592 to 603 (HHRDSPLVQASG) are Cytoplasmic-facing. The chain crosses the membrane as a helical span at residues 604–624 (GPLACFGLVCLGLVCLSVLLF). Residues 625–639 (PGQPSPARCLAQQPL) are Extracellular-facing. The helical transmembrane segment at 640 to 660 (SHLPLTGCLSTLFLQAAEIFV) threads the bilayer. Residues 661–682 (ESELPLSWADRLSGCLRGPWAW) are Cytoplasmic-facing. A helical transmembrane segment spans residues 683-703 (LVVLLAMLVEVALCTWYLVAF). Residues 704–729 (PPEVVTDWHMLPTEALVHCRTRSWVS) are Extracellular-facing. A helical membrane pass occupies residues 730–750 (FGLAHATNATLAFLCFLGTFL). Residues 751–762 (VRSQPGCYNRAR) lie on the Cytoplasmic side of the membrane. A helical transmembrane segment spans residues 763–783 (GLTFAMLAYFITWVSFVPLLA). The Extracellular segment spans residues 784-789 (NVQVVL). Residues 790-810 (RPAVQMGALLLCVLGILAAFH) traverse the membrane as a helical segment. Residues 811–852 (LPRCYLLMRQPGLNTPEFFLGGGPGDAQGQNDGNTGNQGKHE) lie on the Cytoplasmic side of the membrane.

The protein belongs to the G-protein coupled receptor 3 family. TAS1R subfamily. In terms of assembly, forms homodimers or heterodimers with TAS1R1 and TAS1R2.

The protein localises to the cell membrane. Its function is as follows. Putative taste receptor. TAS1R1/TAS1R3 responds to the umami taste stimulus (the taste of monosodium glutamate). TAS1R2/TAS1R3 recognizes diverse natural and synthetic sweeteners. TAS1R3 is essential for the recognition and response to the disaccharide trehalose. Sequence differences within and between species can significantly influence the selectivity and specificity of taste responses. The sequence is that of Taste receptor type 1 member 3 (TAS1R3) from Homo sapiens (Human).